The chain runs to 202 residues: LexA repressor (202 aa).

A DNA-binding region (H-T-H motif) is located at residues 28–48; the sequence is RAEIAQRLGFRSPNAAEEHLK. Active-site for autocatalytic cleavage activity residues include Ser-119 and Lys-156.

This sequence belongs to the peptidase S24 family. Homodimer.

It catalyses the reaction Hydrolysis of Ala-|-Gly bond in repressor LexA.. Its function is as follows. Represses a number of genes involved in the response to DNA damage (SOS response), including recA and lexA. Binds to the 16 bp palindromic sequence 5'-CTGTATATATATACAG-3'. In the presence of single-stranded DNA, RecA interacts with LexA causing an autocatalytic cleavage which disrupts the DNA-binding part of LexA, leading to derepression of the SOS regulon and eventually DNA repair. This chain is LexA repressor, found in Enterobacter sp. (strain 638).